We begin with the raw amino-acid sequence, 508 residues long: Adenylosuccinate synthetase 1, chloroplastic (508 aa).

The N-terminal 56 residues, methionine 1–valine 56, are a transit peptide targeting the chloroplast. Residues glycine 95–lysine 101 and glycine 123–threonine 125 each bind GTP. Aspartate 96 (proton acceptor) is an active-site residue. 2 residues coordinate Mg(2+): aspartate 96 and glycine 123. IMP is bound by residues aspartate 96–lysine 99, asparagine 121–histidine 124, threonine 213, arginine 227, glutamine 307, threonine 322, and arginine 386. Histidine 124 acts as the Proton donor in catalysis. Threonine 382–arginine 388 provides a ligand contact to substrate. Residues arginine 388, lysine 414–aspartate 416, and glycine 497–glycine 499 contribute to the GTP site.

This sequence belongs to the adenylosuccinate synthetase family. Homodimer. It depends on Mg(2+) as a cofactor.

The protein localises to the plastid. The protein resides in the chloroplast. It carries out the reaction IMP + L-aspartate + GTP = N(6)-(1,2-dicarboxyethyl)-AMP + GDP + phosphate + 2 H(+). The protein operates within purine metabolism; AMP biosynthesis via de novo pathway; AMP from IMP: step 1/2. Functionally, plays an important role in the de novo pathway and in the salvage pathway of purine nucleotide biosynthesis. Catalyzes the first committed step in the biosynthesis of AMP from IMP. The protein is Adenylosuccinate synthetase 1, chloroplastic of Capsicum frutescens (Cayenne pepper).